The chain runs to 469 residues: Glutamine synthetase (469 aa).

The GS beta-grasp domain maps to 15-96 (EDVKFVDVRF…INFFIHDPIT (82 aa)). Positions 104–469 (PRNVAKKAEA…PHEFEMYFDV (366 aa)) constitute a GS catalytic domain. Mg(2+)-binding residues include Glu129 and Glu131. Glu205 is an ATP binding site. 2 residues coordinate Mg(2+): Glu210 and Glu218. 221–223 (YKF) contributes to the ATP binding site. L-glutamate is bound by residues 262–263 (NG) and Gly263. His267 contacts Mg(2+). ATP contacts are provided by residues 269 to 271 (HQS) and Ser271. Residues Arg320, Glu326, and Arg338 each contribute to the L-glutamate site. 3 residues coordinate ATP: Arg338, Arg343, and Lys352. Glu357 contributes to the Mg(2+) binding site. Arg359 is a binding site for L-glutamate. Tyr397 is subject to O-AMP-tyrosine.

The protein belongs to the glutamine synthetase family. In terms of assembly, oligomer of 12 subunits arranged in the form of two hexagons. The cofactor is Mg(2+).

It is found in the cytoplasm. It carries out the reaction L-glutamate + NH4(+) + ATP = L-glutamine + ADP + phosphate + H(+). With respect to regulation, the activity of this enzyme could be controlled by adenylation under conditions of abundant glutamine. Catalyzes the ATP-dependent biosynthesis of glutamine from glutamate and ammonia. Complements L-glutamine auxotrophy of an E.coli glnA mutant. The protein is Glutamine synthetase of Streptomyces coelicolor (strain ATCC BAA-471 / A3(2) / M145).